The chain runs to 85 residues: MAHKKAGGSTRNGRDSEAKRLGVKRFGGETVLAGSIIVRQRGTKFHAGNNVGCGRDHTLFAKADGKVKFEVKGPNNRKYISIVAE.

Positions 1 to 20 are disordered; that stretch reads MAHKKAGGSTRNGRDSEAKR.

Belongs to the bacterial ribosomal protein bL27 family.

The sequence is that of Large ribosomal subunit protein bL27 from Enterobacter sp. (strain 638).